The following is a 341-amino-acid chain: UDP-3-O-(3-hydroxymyristoyl)glucosamine N-acyltransferase (341 aa).

Residue H239 is the Proton acceptor of the active site.

Belongs to the transferase hexapeptide repeat family. LpxD subfamily. In terms of assembly, homotrimer.

It catalyses the reaction a UDP-3-O-[(3R)-3-hydroxyacyl]-alpha-D-glucosamine + a (3R)-hydroxyacyl-[ACP] = a UDP-2-N,3-O-bis[(3R)-3-hydroxyacyl]-alpha-D-glucosamine + holo-[ACP] + H(+). The enzyme catalyses UDP-3-O-[(3R)-3-hydroxytetradecanoyl]-alpha-D-glucosamine + (3R)-hydroxytetradecanoyl-[ACP] = UDP-2-N,3-O-bis[(3R)-3-hydroxytetradecanoyl]-alpha-D-glucosamine + holo-[ACP] + H(+). Its pathway is glycolipid biosynthesis; lipid IV(A) biosynthesis; lipid IV(A) from (3R)-3-hydroxytetradecanoyl-[acyl-carrier-protein] and UDP-N-acetyl-alpha-D-glucosamine: step 3/6. Its function is as follows. Catalyzes the N-acylation of UDP-3-O-(hydroxytetradecanoyl)glucosamine using 3-hydroxytetradecanoyl-ACP as the acyl donor. Is involved in the biosynthesis of lipid A, a phosphorylated glycolipid that anchors the lipopolysaccharide to the outer membrane of the cell. In Escherichia coli O157:H7, this protein is UDP-3-O-(3-hydroxymyristoyl)glucosamine N-acyltransferase.